The following is a 342-amino-acid chain: Ribosomal RNA small subunit methyltransferase C (342 aa).

Belongs to the methyltransferase superfamily. RsmC family. In terms of assembly, monomer.

It localises to the cytoplasm. It carries out the reaction guanosine(1207) in 16S rRNA + S-adenosyl-L-methionine = N(2)-methylguanosine(1207) in 16S rRNA + S-adenosyl-L-homocysteine + H(+). Specifically methylates the guanine in position 1207 of 16S rRNA in the 30S particle. The protein is Ribosomal RNA small subunit methyltransferase C of Erwinia tasmaniensis (strain DSM 17950 / CFBP 7177 / CIP 109463 / NCPPB 4357 / Et1/99).